We begin with the raw amino-acid sequence, 284 residues long: uncharacterized protein (284 aa).

Over 1-8 the chain is Cytoplasmic; that stretch reads MLWKVSKM. The chain crosses the membrane as a helical span at residues 9–25; that stretch reads FLGGLVALTTISVATLY. At 26-80 the chain is on the extracellular side; that stretch reads HYQNRLVYPSWAQGARNHVDTPDSRGIPYEKLTLITQDHIKLEAWDIKNENSTST. The helical transmembrane segment at 81 to 101 threads the bilayer; that stretch reads VLILCPNAGNIGYFILIIDIF. Residues 102–284 are Cytoplasmic-facing; the sequence is YRQFGMSVFI…RDFLIEKGFI (183 aa).

The protein to S.pombe bem46 and M.tuberculosis Rv2307c.

Its subcellular location is the mitochondrion membrane. This is an uncharacterized protein from Saccharomyces cerevisiae (strain ATCC 204508 / S288c) (Baker's yeast).